The chain runs to 156 residues: UPF0039 protein Mb2876c (156 aa).

One can recognise an N-acetyltransferase domain in the interval 8–150; that stretch reads VWAKDLDARA…PHVPMLRPGS (143 aa).

The protein belongs to the UPF0039 (ElaA) family.

The protein is UPF0039 protein Mb2876c of Mycobacterium bovis (strain ATCC BAA-935 / AF2122/97).